We begin with the raw amino-acid sequence, 235 residues long: MARRPSTDDLRSGPERFMALVKTTVPPVHPAGLPFIGASLALAAAGRRNRWVRGAGLVAAGANAAFFRHPPRVPPTRPGVVVAPADGLICLVEDAEPPAELNLPARPVPRVSIFLSIFDAHVQRIPISGEVVAVEHRPGLFGSAELAAASEDNERNSVVIRTDTGAQVIAVQIAGLVARRIVCDLTTGDKVTIGDTYGLIRYGSRLDTYLPEGTDIQVLPGQRAVGGETILAELP.

The active-site Schiff-base intermediate with substrate; via pyruvic acid is Ser-204. Residue Ser-204 is modified to Pyruvic acid (Ser); by autocatalysis.

The protein belongs to the phosphatidylserine decarboxylase family. PSD-A subfamily. In terms of assembly, heterodimer of a large membrane-associated beta subunit and a small pyruvoyl-containing alpha subunit. It depends on pyruvate as a cofactor. Post-translationally, is synthesized initially as an inactive proenzyme. Formation of the active enzyme involves a self-maturation process in which the active site pyruvoyl group is generated from an internal serine residue via an autocatalytic post-translational modification. Two non-identical subunits are generated from the proenzyme in this reaction, and the pyruvate is formed at the N-terminus of the alpha chain, which is derived from the carboxyl end of the proenzyme. The post-translation cleavage follows an unusual pathway, termed non-hydrolytic serinolysis, in which the side chain hydroxyl group of the serine supplies its oxygen atom to form the C-terminus of the beta chain, while the remainder of the serine residue undergoes an oxidative deamination to produce ammonia and the pyruvoyl prosthetic group on the alpha chain.

The protein localises to the cell membrane. It carries out the reaction a 1,2-diacyl-sn-glycero-3-phospho-L-serine + H(+) = a 1,2-diacyl-sn-glycero-3-phosphoethanolamine + CO2. It participates in phospholipid metabolism; phosphatidylethanolamine biosynthesis; phosphatidylethanolamine from CDP-diacylglycerol: step 2/2. Its function is as follows. Catalyzes the formation of phosphatidylethanolamine (PtdEtn) from phosphatidylserine (PtdSer). The chain is Phosphatidylserine decarboxylase proenzyme from Mycobacterium sp. (strain JLS).